The primary structure comprises 421 residues: MFTRNMTIADYDPVLWQAIQDENRRQEEHIELIASENYASPRVMEAQGSQFTNKYAEGYPGKRYYGGCEYADIVEQLAIDRAKELFGADYVNVQPHSGSQANAAVYGALINAGDTILGMDLAHGGHLTHGAKVSFSGKIYNSVLYGITADGLIDYEDVRQKALECKPKLIVAGFSAYSQVVDWAKMREIADEVGAYLFVDMAHVAGLIAAGLYLNPLPHAHVVTTTTHKTLGGPRGGLILSSCGDEEIYKKLQSSVFPANQGGPLVHIIAAKAVCFKEALEPQYKEYQANVIKNAKAMVEVFKQRGYDVVSNGTENHLFLVSFIKQGLTGKAADAALGKANITVNKNAVPNDPQKPFVTSGIRVGTPSVTRRGFNENDVRELAGWMCDVLDALGKENEEQVIAETKEKVLAICKRLPVYPK.

Residues Leu121 and 125 to 127 (GHL) contribute to the (6S)-5,6,7,8-tetrahydrofolate site. Lys229 carries the N6-(pyridoxal phosphate)lysine modification.

The protein belongs to the SHMT family. Homodimer. The cofactor is pyridoxal 5'-phosphate.

The protein localises to the cytoplasm. The enzyme catalyses (6R)-5,10-methylene-5,6,7,8-tetrahydrofolate + glycine + H2O = (6S)-5,6,7,8-tetrahydrofolate + L-serine. It functions in the pathway one-carbon metabolism; tetrahydrofolate interconversion. The protein operates within amino-acid biosynthesis; glycine biosynthesis; glycine from L-serine: step 1/1. Its function is as follows. Catalyzes the reversible interconversion of serine and glycine with tetrahydrofolate (THF) serving as the one-carbon carrier. This reaction serves as the major source of one-carbon groups required for the biosynthesis of purines, thymidylate, methionine, and other important biomolecules. Also exhibits THF-independent aldolase activity toward beta-hydroxyamino acids, producing glycine and aldehydes, via a retro-aldol mechanism. In Haemophilus influenzae (strain 86-028NP), this protein is Serine hydroxymethyltransferase.